The chain runs to 328 residues: Beta-ketoacyl-[acyl-carrier-protein] synthase III (328 aa).

Residues Cys122 and His255 contribute to the active site. Residues Gln256–Arg260 form an ACP-binding region. Asn285 is an active-site residue.

It belongs to the thiolase-like superfamily. FabH family. In terms of assembly, homodimer.

It localises to the cytoplasm. It catalyses the reaction malonyl-[ACP] + acetyl-CoA + H(+) = 3-oxobutanoyl-[ACP] + CO2 + CoA. It participates in lipid metabolism; fatty acid biosynthesis. Functionally, catalyzes the condensation reaction of fatty acid synthesis by the addition to an acyl acceptor of two carbons from malonyl-ACP. Catalyzes the first condensation reaction which initiates fatty acid synthesis and may therefore play a role in governing the total rate of fatty acid production. Possesses both acetoacetyl-ACP synthase and acetyl transacylase activities. Its substrate specificity determines the biosynthesis of branched-chain and/or straight-chain of fatty acids. The chain is Beta-ketoacyl-[acyl-carrier-protein] synthase III from Herminiimonas arsenicoxydans.